Here is a 78-residue protein sequence, read N- to C-terminus: MSGMRILTGSVALGGLTYAIWIIFSPGEERKKEILKSLPEANPVRMEETRKRNAIMLQVLKDAAETNDNIARGFGSQK.

Residues 1–5 lie on the Mitochondrial matrix side of the membrane; that stretch reads MSGMR. A helical transmembrane segment spans residues 6–26; that stretch reads ILTGSVALGGLTYAIWIIFSP. Residues 27 to 78 are Mitochondrial intermembrane-facing; sequence GEERKKEILKSLPEANPVRMEETRKRNAIMLQVLKDAAETNDNIARGFGSQK.

The protein belongs to the UQCC3 family. In terms of assembly, associates with the ubiquinol-cytochrome c reductase complex (mitochondrial respiratory chain complex III or cytochrome b-c1 complex).

It localises to the mitochondrion inner membrane. In terms of biological role, required for the assembly of the ubiquinol-cytochrome c reductase complex (mitochondrial respiratory chain complex III or cytochrome b-c1 complex), mediating cytochrome b recruitment and probably stabilization within the complex. Thereby, plays an important role in ATP production by mitochondria. Cardiolipin-binding protein, it may also control the cardiolipin composition of mitochondria membranes and their morphology. The polypeptide is Ubiquinol-cytochrome-c reductase complex assembly factor 3 (Danio rerio (Zebrafish)).